Consider the following 65-residue polypeptide: MSKLKGPDGRVGDRLPDGRPAISWQRRWTEGALPLWLVATAGGTAVIFVLGIFFYGSYTGIGNAG.

The chain crosses the membrane as a helical span at residues 35-55; sequence LWLVATAGGTAVIFVLGIFFY.

It belongs to the PsbJ family. As to quaternary structure, PSII is composed of 1 copy each of membrane proteins PsbA, PsbB, PsbC, PsbD, PsbE, PsbF, PsbH, PsbI, PsbJ, PsbK, PsbL, PsbM, PsbT, PsbX, PsbY, Psb30/Ycf12, peripheral proteins PsbO, CyanoQ (PsbQ), PsbU, PsbV and a large number of cofactors. It forms dimeric complexes.

The protein resides in the cellular thylakoid membrane. Its function is as follows. One of the components of the core complex of photosystem II (PSII). PSII is a light-driven water:plastoquinone oxidoreductase that uses light energy to abstract electrons from H(2)O, generating O(2) and a proton gradient subsequently used for ATP formation. It consists of a core antenna complex that captures photons, and an electron transfer chain that converts photonic excitation into a charge separation. The chain is Photosystem II reaction center protein J from Prochlorococcus marinus (strain NATL1A).